The chain runs to 185 residues: ATP-dependent protease subunit HslV (185 aa).

Residue Thr12 is part of the active site. Ala168, Cys171, and Thr174 together coordinate Na(+).

It belongs to the peptidase T1B family. HslV subfamily. As to quaternary structure, a double ring-shaped homohexamer of HslV is capped on each side by a ring-shaped HslU homohexamer. The assembly of the HslU/HslV complex is dependent on binding of ATP.

The protein localises to the cytoplasm. It catalyses the reaction ATP-dependent cleavage of peptide bonds with broad specificity.. Its activity is regulated as follows. Allosterically activated by HslU binding. In terms of biological role, protease subunit of a proteasome-like degradation complex believed to be a general protein degrading machinery. In Roseobacter denitrificans (strain ATCC 33942 / OCh 114) (Erythrobacter sp. (strain OCh 114)), this protein is ATP-dependent protease subunit HslV.